The chain runs to 353 residues: uncharacterized protein (353 aa).

This is an uncharacterized protein from Caenorhabditis elegans.